A 207-amino-acid polypeptide reads, in one-letter code: Thymidylate kinase (207 aa).

12-19 is a binding site for ATP; it reads GVDGAGKS.

The protein belongs to the thymidylate kinase family.

The catalysed reaction is dTMP + ATP = dTDP + ADP. In terms of biological role, phosphorylation of dTMP to form dTDP in both de novo and salvage pathways of dTTP synthesis. In Bordetella petrii (strain ATCC BAA-461 / DSM 12804 / CCUG 43448), this protein is Thymidylate kinase.